The sequence spans 224 residues: MSESKFIFLIFNNDSMCKSEALSKELFSNAKFSKNNKFSNSDLAGFSLLAVSLSGNTIKDVALCITGLLAGDGILDTNGEIRDPFNGSRDADNVAVSVKFLVCLSEGGYAITGAFFFNSCKMSGLFTIISKDLLKMVNLTPSEFGDMGLYENACGDSLGTATRSERSSSLNVDENESTDEEACWYKHGGLESPTNGVFLEYEMSAGAAALTGYVIVFFVYDSLL.

This is an uncharacterized protein from Saccharomyces cerevisiae (strain ATCC 204508 / S288c) (Baker's yeast).